Here is a 183-residue protein sequence, read N- to C-terminus: ATP synthase subunit delta (183 aa).

Belongs to the ATPase delta chain family. In terms of assembly, F-type ATPases have 2 components, F(1) - the catalytic core - and F(0) - the membrane proton channel. F(1) has five subunits: alpha(3), beta(3), gamma(1), delta(1), epsilon(1). F(0) has three main subunits: a(1), b(2) and c(10-14). The alpha and beta chains form an alternating ring which encloses part of the gamma chain. F(1) is attached to F(0) by a central stalk formed by the gamma and epsilon chains, while a peripheral stalk is formed by the delta and b chains.

Its subcellular location is the cell inner membrane. F(1)F(0) ATP synthase produces ATP from ADP in the presence of a proton or sodium gradient. F-type ATPases consist of two structural domains, F(1) containing the extramembraneous catalytic core and F(0) containing the membrane proton channel, linked together by a central stalk and a peripheral stalk. During catalysis, ATP synthesis in the catalytic domain of F(1) is coupled via a rotary mechanism of the central stalk subunits to proton translocation. In terms of biological role, this protein is part of the stalk that links CF(0) to CF(1). It either transmits conformational changes from CF(0) to CF(1) or is implicated in proton conduction. The polypeptide is ATP synthase subunit delta (Ehrlichia canis (strain Jake)).